The chain runs to 135 residues: Galectin-1 (135 aa).

Ala2 carries the post-translational modification N-acetylalanine. One can recognise a Galectin domain in the interval 4–135 (GLVASNLNLK…DFKIKCVAFD (132 aa)). An N6-acetyllysine mark is found at Lys13 and Lys29. Ser30 carries the post-translational modification Phosphoserine. Residues 45 to 49 (HFNPR), His53, Asn62, and 69 to 72 (WGAE) contribute to the a beta-D-galactoside site. Lys108 carries the N6-acetyllysine; alternate modification. Lys108 is subject to N6-succinyllysine; alternate. Lys128 is subject to N6-acetyllysine.

As to quaternary structure, homodimer. Binds LGALS3BP. Interacts with CD2, CD3, CD4, CD6, CD7, CD43, ALCAM and CD45. Interacts with laminin (via poly-N-acetyllactosamine). Interacts with SUSD2. Interacts with cargo receptor TMED10; the interaction mediates the translocation from the cytoplasm into the ERGIC (endoplasmic reticulum-Golgi intermediate compartment) and thereby secretion. In terms of processing, the N-terminus is blocked.

It is found in the secreted. It localises to the extracellular space. The protein localises to the extracellular matrix. The protein resides in the cytoplasm. In terms of biological role, lectin that binds beta-galactoside and a wide array of complex carbohydrates. Plays a role in regulating apoptosis, cell proliferation and cell differentiation. Inhibits CD45 protein phosphatase activity and therefore the dephosphorylation of Lyn kinase. Strong inducer of T-cell apoptosis. The chain is Galectin-1 from Bubalus bubalis (Domestic water buffalo).